Consider the following 557-residue polypeptide: Resveratrol cleavage oxygenase 1 (557 aa).

The segment at 1–46 (MAILNDPPSSTTILSLHTPDVPPPSKPTPATTSHPQDSRNPRNLTS) is disordered. Residues Tyr144 and Lys177 each coordinate piceatannol. Residues Tyr144 and Lys177 each contribute to the trans-resveratrol site. His211, His262, and His334 together coordinate Fe cation. Glu404 contributes to the piceatannol binding site. Trans-resveratrol is bound at residue Glu404. Position 523 (His523) interacts with Fe cation.

The protein belongs to the carotenoid oxygenase family. Fe(2+) serves as cofactor.

It carries out the reaction trans-resveratrol + O2 = 3,5-dihydroxybenzaldehyde + 4-hydroxybenzaldehyde. It catalyses the reaction piceatannol + O2 = 3,5-dihydroxybenzaldehyde + 3,4-dihydroxybenzaldehyde. Dioxygenase that cleaves the interphenyl C-alpha-C-beta double bond of resveratrol to yield 3,5-dihydroxybenzaldehyde and 4-hydroxybenzaldehyde. Also cleaves piceatannol, a compound that differs from resveratrol only in the occurrence of an additional hydroxyl group, which leads to the production of 3,4-dihydroxybenzaldehyde and 3,5-hydroxybenzaldehyde. The protein is Resveratrol cleavage oxygenase 1 of Botryotinia fuckeliana (strain B05.10) (Noble rot fungus).